Consider the following 65-residue polypeptide: Large ribosomal subunit protein bL28 (65 aa).

The segment at 1–21 is disordered; that stretch reads MPGRDQLTGQKALSGNKRSHA.

The protein belongs to the bacterial ribosomal protein bL28 family.

In Metamycoplasma arthritidis (strain 158L3-1) (Mycoplasma arthritidis), this protein is Large ribosomal subunit protein bL28.